We begin with the raw amino-acid sequence, 375 residues long: Succinyl-diaminopimelate desuccinylase (375 aa).

His-66 is a binding site for Zn(2+). Residue Asp-68 is part of the active site. Asp-99 lines the Zn(2+) pocket. Catalysis depends on Glu-133, which acts as the Proton acceptor. Zn(2+) contacts are provided by Glu-134, Glu-162, and His-348.

The protein belongs to the peptidase M20A family. DapE subfamily. As to quaternary structure, homodimer. The cofactor is Zn(2+). Co(2+) is required as a cofactor.

It catalyses the reaction N-succinyl-(2S,6S)-2,6-diaminopimelate + H2O = (2S,6S)-2,6-diaminopimelate + succinate. It functions in the pathway amino-acid biosynthesis; L-lysine biosynthesis via DAP pathway; LL-2,6-diaminopimelate from (S)-tetrahydrodipicolinate (succinylase route): step 3/3. Its function is as follows. Catalyzes the hydrolysis of N-succinyl-L,L-diaminopimelic acid (SDAP), forming succinate and LL-2,6-diaminopimelate (DAP), an intermediate involved in the bacterial biosynthesis of lysine and meso-diaminopimelic acid, an essential component of bacterial cell walls. The polypeptide is Succinyl-diaminopimelate desuccinylase (Serratia proteamaculans (strain 568)).